Reading from the N-terminus, the 253-residue chain is Triosephosphate isomerase (253 aa).

9-11 (NWK) contributes to the substrate binding site. His95 functions as the Electrophile in the catalytic mechanism. Residue Glu167 is the Proton acceptor of the active site. Substrate contacts are provided by residues Gly173, Ser213, and 234 to 235 (GG). Ser213 carries the post-translational modification Phosphoserine.

Belongs to the triosephosphate isomerase family. As to quaternary structure, homodimer.

Its subcellular location is the cytoplasm. The enzyme catalyses D-glyceraldehyde 3-phosphate = dihydroxyacetone phosphate. Its pathway is carbohydrate biosynthesis; gluconeogenesis. It participates in carbohydrate degradation; glycolysis; D-glyceraldehyde 3-phosphate from glycerone phosphate: step 1/1. Involved in the gluconeogenesis. Catalyzes stereospecifically the conversion of dihydroxyacetone phosphate (DHAP) to D-glyceraldehyde-3-phosphate (G3P). In Bacillus licheniformis (strain ATCC 14580 / DSM 13 / JCM 2505 / CCUG 7422 / NBRC 12200 / NCIMB 9375 / NCTC 10341 / NRRL NRS-1264 / Gibson 46), this protein is Triosephosphate isomerase.